The primary structure comprises 74 residues: Anionic peptide clone 9 (74 aa).

The N-terminal stretch at 1-24 (MVSKSLIVLLLVSVLVSTFFTTEA) is a signal peptide.

This sequence belongs to the non-disulfide-bridged peptide (NDBP) superfamily. Long chain multifunctional peptide (group 2) family. Expressed by the venom gland.

The protein resides in the secreted. May be an antimicrobial peptide. The sequence is that of Anionic peptide clone 9 from Tityus costatus (Brazilian scorpion).